The following is a 286-amino-acid chain: Beta-lactamase SHV-46 (286 aa).

An N-terminal signal peptide occupies residues 1–21 (MRYIRLCIISLLATLPLAVHA). S66 serves as the catalytic Acyl-ester intermediate. A disulfide bridge connects residues C73 and C119. E164 (proton acceptor) is an active-site residue. Substrate is bound at residue 230–232 (KTG).

Belongs to the class-A beta-lactamase family.

The catalysed reaction is a beta-lactam + H2O = a substituted beta-amino acid. The sequence is that of Beta-lactamase SHV-46 (bla) from Klebsiella oxytoca.